We begin with the raw amino-acid sequence, 193 residues long: Protein PATRONUS 1 (193 aa).

A DEN-box motif is present at residues 14–16 (DEN). A D-box motif is present at residues 46-49 (RKAL).

As to quaternary structure, interacts directly with the anaphase promoting complex/cyclosome (APC/C) through the CDC27B and CDC20-1 subunits. In terms of tissue distribution, expressed in somatic and reproductive tissues. Expressed in inflorescence, young buds, roots and basal portion of young leaves. Expressed in proliferating cells such as apical meristems of roots and shoots, expanding cotyledons and leaves, root vascular tissues, and in stomatal precursor cells.

The protein resides in the nucleus. The protein localises to the cytoplasm. Required for the maintenance of centromeric cohesion during interkinesis, until meiosis II. Required for regular configuration and segregation of sister chromatids in meiosis II. Also required for centromere cohesion during meiosis I. Involved in spindle organization at the end of telophase I and in meiosis II. Required to prevent precocious release of pericentromeric cohesins during meiosis, but not for cohesion establishment and monopolar orientation of kinetochores at meiosis I. Involved also in somatic development. Regulates mitotic cell division and ploidy stability in somatic cell types. May be involved in the organization of microtubules dynamics. Involved in abiotic stresses and mono- or divalent ions tolerance and may play a role in maintaining meristematic activity under saline conditions. PANS1 and GIG1 are part of a network linking centromere cohesion and cell cycle progression through control of APC/C activity. Regulates the number of dividing cells in root meristem and is necessary for the anaphase onset control through an APC/C-mediated pathway. Involved in maintaining correct chromosome arm cohesion under stress conditions. The sequence is that of Protein PATRONUS 1 from Arabidopsis thaliana (Mouse-ear cress).